The primary structure comprises 294 residues: GTP cyclohydrolase FolE2 (294 aa).

The protein belongs to the GTP cyclohydrolase IV family.

It carries out the reaction GTP + H2O = 7,8-dihydroneopterin 3'-triphosphate + formate + H(+). It functions in the pathway cofactor biosynthesis; 7,8-dihydroneopterin triphosphate biosynthesis; 7,8-dihydroneopterin triphosphate from GTP: step 1/1. In terms of biological role, converts GTP to 7,8-dihydroneopterin triphosphate. In Acinetobacter baylyi (strain ATCC 33305 / BD413 / ADP1), this protein is GTP cyclohydrolase FolE2.